A 413-amino-acid chain; its full sequence is Coiled-coil domain-containing protein 83 (413 aa).

2 coiled-coil regions span residues 32 to 186 and 215 to 255; these read HCQI…RIIR and IWEN…QLFN.

This Bos taurus (Bovine) protein is Coiled-coil domain-containing protein 83 (CCDC83).